Here is a 358-residue protein sequence, read N- to C-terminus: Putative ankyrin repeat protein FPV242 (358 aa).

10 ANK repeats span residues 6-35 (NNYR…NMIV), 40-69 (NNHT…NLVY), 91-118 (TRRN…DKGV), 119-147 (ELTG…SVEY), 149-177 (GFFP…DINK), 180-209 (CGET…DIEK), 214-243 (EQDP…SIDT), 248-277 (NHKP…NPFI), 280-312 (EGNT…RLPG), and 316-345 (YYIQ…RITS).

This is Putative ankyrin repeat protein FPV242 from Fowlpox virus (strain NVSL) (FPV).